Here is a 345-residue protein sequence, read N- to C-terminus: DNA-directed RNA polymerase subunit alpha (345 aa).

Residues 1–241 are alpha N-terminal domain (alpha-NTD); that stretch reads MLRDTHLALQ…DQLGMFINFE (241 aa). The segment at 257-345 is alpha C-terminal domain (alpha-CTD); sequence FNPNLLRKVD…ELVKRSDNPF (89 aa).

This sequence belongs to the RNA polymerase alpha chain family. Homodimer. The RNAP catalytic core consists of 2 alpha, 1 beta, 1 beta' and 1 omega subunit. When a sigma factor is associated with the core the holoenzyme is formed, which can initiate transcription.

The catalysed reaction is RNA(n) + a ribonucleoside 5'-triphosphate = RNA(n+1) + diphosphate. In terms of biological role, DNA-dependent RNA polymerase catalyzes the transcription of DNA into RNA using the four ribonucleoside triphosphates as substrates. The sequence is that of DNA-directed RNA polymerase subunit alpha from Acidiphilium cryptum (strain JF-5).